Here is a 304-residue protein sequence, read N- to C-terminus: Non-specific ribonucleoside hydrolase RihC (304 aa).

The active site involves H233.

This sequence belongs to the IUNH family. RihC subfamily.

Hydrolyzes both purine and pyrimidine ribonucleosides with a broad-substrate specificity. In Shigella dysenteriae serotype 1 (strain Sd197), this protein is Non-specific ribonucleoside hydrolase RihC.